Reading from the N-terminus, the 286-residue chain is Beta-lactamase SHV-34 (286 aa).

Positions 1 to 21 (MRYFRLCIISLLATLPLAVHA) are cleaved as a signal peptide. The Acyl-ester intermediate role is filled by Ser66. A disulfide bond links Cys73 and Cys119. Glu164 serves as the catalytic Proton acceptor. 230–232 (KTG) serves as a coordination point for substrate.

It belongs to the class-A beta-lactamase family.

The catalysed reaction is a beta-lactam + H2O = a substituted beta-amino acid. In terms of biological role, hydrolyzes ceftazidime and cefotaxime. The protein is Beta-lactamase SHV-34 (bla) of Escherichia coli.